The sequence spans 178 residues: Large ribosomal subunit protein uL10 (178 aa).

The protein belongs to the universal ribosomal protein uL10 family. As to quaternary structure, part of the ribosomal stalk of the 50S ribosomal subunit. The N-terminus interacts with L11 and the large rRNA to form the base of the stalk. The C-terminus forms an elongated spine to which L12 dimers bind in a sequential fashion forming a multimeric L10(L12)X complex.

Its function is as follows. Forms part of the ribosomal stalk, playing a central role in the interaction of the ribosome with GTP-bound translation factors. This chain is Large ribosomal subunit protein uL10, found in Dictyoglomus turgidum (strain DSM 6724 / Z-1310).